We begin with the raw amino-acid sequence, 104 residues long: Cuticle protein 67, isoform B (104 aa).

A run of 7 repeats spans residues 7-10 (AAPA), 14-17 (AAPA), 21-24 (AAPA), 28-31 (AAPA), 85-88 (AAPA), 92-95 (AAPA), and 98-101 (AAPA).

Component of the cuticle of migratory locust which contains more than 100 different structural proteins. The chain is Cuticle protein 67, isoform B from Locusta migratoria (Migratory locust).